The following is a 1785-amino-acid chain: Brefeldin A-inhibited guanine nucleotide-exchange protein 2 (1785 aa).

M1 carries the post-translational modification N-acetylmethionine. Residues 2–224 (QESQTKSMFV…KPQSPVIQAA (223 aa)) are DCB; DCB:DCB domain and DCB:HUS domain interaction. 3 positions are modified to phosphoserine: S214, S218, and S227. Residues 232-285 (RLKHSQAQSKPTTPEKTDLTNGEHARSDSGKVSTENGDAPRERGSSLSGTDDGA) form a disordered region. Position 244 is a phosphothreonine (T244). A compositionally biased stretch (basic and acidic residues) spans 244–260 (TPEKTDLTNGEHARSDS). Residues S277, S348, and S349 each carry the phosphoserine modification. The interval 508 to 528 (ADAQCVVDIYVNYDCDLNAAN) is HUS; DCB:HUS domain interaction. S614 carries the phosphoserine modification. T616 is subject to Phosphothreonine. At S617 the chain carries Phosphoserine. Residue T626 is modified to Phosphothreonine. The region spanning 654-785 (FNKKPKRGIQ…IIMLTTDLHS (132 aa)) is the SEC7 domain. Phosphoserine occurs at positions 700, 1511, 1513, 1514, 1525, 1528, 1534, and 1782. Residues 1514 to 1532 (SIDKNPSERGQSQLSNPTD) are compositionally biased toward polar residues. Residues 1514–1535 (SIDKNPSERGQSQLSNPTDDSW) are disordered.

In terms of assembly, homodimer. Interacts with ARFGEF1/BIG1; both proteins are probably part of the same or very similar macromolecular complexes. Interacts with PRKAR1A, PRKAR2A, PRKAR1B, PRKAR2B, PPP1CC, PDE3A, TNFRSF1A, MYCBP and EXOC7. Interacts with GABRB1, GABRB2 and GABRB3. In vitro phosphorylated by PKA reducing its GEF activity and dephosphorylated by phosphatase PP1. In terms of tissue distribution, expressed in placenta, lung, heart, brain, kidney and pancreas.

Its subcellular location is the cytoplasm. It is found in the membrane. The protein localises to the golgi apparatus. The protein resides in the perinuclear region. It localises to the trans-Golgi network. Its subcellular location is the endosome. It is found in the cytoskeleton. The protein localises to the microtubule organizing center. The protein resides in the centrosome. It localises to the cell projection. Its subcellular location is the dendrite. It is found in the cytoplasmic vesicle. The protein localises to the synapse. Its activity is regulated as follows. Inhibited by brefeldin A. Promotes guanine-nucleotide exchange on ARF1 and ARF3 and to a lower extent on ARF5 and ARF6. Promotes the activation of ARF1/ARF5/ARF6 through replacement of GDP with GTP. Involved in the regulation of Golgi vesicular transport. Required for the integrity of the endosomal compartment. Involved in trafficking from the trans-Golgi network (TGN) to endosomes and is required for membrane association of the AP-1 complex and GGA1. Seems to be involved in recycling of the transferrin receptor from recycling endosomes to the plasma membrane. Probably is involved in the exit of GABA(A) receptors from the endoplasmic reticulum. Involved in constitutive release of tumor necrosis factor receptor 1 via exosome-like vesicles; the function seems to involve PKA and specifically PRKAR2B. Proposed to act as A kinase-anchoring protein (AKAP) and may mediate crosstalk between Arf and PKA pathways. In Homo sapiens (Human), this protein is Brefeldin A-inhibited guanine nucleotide-exchange protein 2 (ARFGEF2).